Here is a 351-residue protein sequence, read N- to C-terminus: Phosphate acyltransferase (351 aa).

This sequence belongs to the PlsX family. In terms of assembly, homodimer. Probably interacts with PlsY.

The protein resides in the cytoplasm. It carries out the reaction a fatty acyl-[ACP] + phosphate = an acyl phosphate + holo-[ACP]. The protein operates within lipid metabolism; phospholipid metabolism. Its function is as follows. Catalyzes the reversible formation of acyl-phosphate (acyl-PO(4)) from acyl-[acyl-carrier-protein] (acyl-ACP). This enzyme utilizes acyl-ACP as fatty acyl donor, but not acyl-CoA. The protein is Phosphate acyltransferase of Neisseria meningitidis serogroup A / serotype 4A (strain DSM 15465 / Z2491).